We begin with the raw amino-acid sequence, 276 residues long: Short-chain dehydrogenase anuF (276 aa).

NADP(+)-binding residues include isoleucine 18, aspartate 68, lysine 130, tyrosine 176, lysine 180, valine 209, and threonine 211. Tyrosine 176 acts as the Proton acceptor in catalysis. Tyrosine 176 serves as the catalytic Proton donor. Lysine 180 (lowers pKa of active site Tyr) is an active-site residue.

Belongs to the short-chain dehydrogenases/reductases (SDR) family.

The catalysed reaction is (2R,9S)-annullatin H + A = (2R)-annullatin F + AH2. Cytochrome P450 monooxygenase; part of the gene cluster that mediates the biosynthesis of annullatin D, an alkylated aromatic polyketide with a fused dihydrobenzofuran lactone ring system that exhibits potent agonistic activities toward the cannabinoid receptors. Within the pathway, anuF is involved in the formation of (2R)-annullatin F from the diastereomer of (2S,9S)-annullatin H (compound 12). The annullatin backbone 2-hydroxymethyl-3-pentylphenol is assembled from one acetyl-CoA starter unit and 5 malonyl-CoA elongation units by cooperation of the highly reducing polyketide synthase anuA, the short-chain dehydrogenase anuB and the oxidoreductase anuC, before being hydroxylated at the C-5 alkyl chain by the cytochrome P450 monooxygenase anuE to form (8S)-annullatin E. The prenyltransferase anuH subsequently installs one isoprenyl group at the benzene ring to form (8S)-annullatin J. Enzymatic or nonenzymatic dihydro-benzofuran ring formation between the prenyl and the phenolic hydroxyl groups in (8S)-annullatin J results in two diastereomers (2S,9S)-annullatin H and compound 12. The intermediate (2S,9S)-annullatin H is then converted to (2S,9S)-annullatin D by the FAD-linked oxidoreductase anuG-catalyzed five-member lactone ring formation. The isomer 12 acts as a substrate for the short-chain dehydrogenase anuF and is oxidized to (2R)-annullatin F, which is subsequently acetylated by an acetyltransferase leading to (2R)-annullatin G formation. The remaining enzymes identified within the cluster, anuD, anuI and anuJ, seem not to be involved in annullatin biosynthesis. This Penicillium roqueforti (strain FM164) protein is Short-chain dehydrogenase anuF.